The primary structure comprises 277 residues: B3 domain-containing protein At3g19184 (277 aa).

The disordered stretch occupies residues 33-94 (QSLRVSSSSS…LERRPRRSSR (62 aa)). The segment at residues 130–221 (FTKPMLQSHV…TFKVYIIRVN (92 aa)) is a DNA-binding region (TF-B3). A compositionally biased stretch (acidic residues) spans 224 to 250 (ANNDSDGNEVNDDDSDGNEEDRDNDNE). Positions 224–277 (ANNDSDGNEVNDDDSDGNEEDRDNDNESNEKQKETVSEGRQLRSSGKRKRRGRK) are disordered. Residues 251–264 (SNEKQKETVSEGRQ) are compositionally biased toward basic and acidic residues. Residues 268 to 277 (SGKRKRRGRK) are compositionally biased toward basic residues.

It is found in the nucleus. The chain is B3 domain-containing protein At3g19184 from Arabidopsis thaliana (Mouse-ear cress).